The following is a 677-amino-acid chain: Envelope glycoprotein (677 aa).

A signal peptide spans 1-33 (MGSGYQLLQLPRERFRKTSFLVWVIILFQRAIS). At 34 to 651 (MPLGIVTNST…DLNLWTGWRQ (618 aa)) the chain is on the extracellular side. N-linked (GlcNAc...) asparagine; by host glycosylation occurs at asparagine 41. 5 cysteine pairs are disulfide-bonded: cysteine 54/cysteine 610, cysteine 109/cysteine 136, cysteine 122/cysteine 148, cysteine 512/cysteine 557, and cysteine 602/cysteine 609. Residues 55-202 (RDKLSSTSQL…HFWKATPAHE (148 aa)) are receptor-binding. N-linked (GlcNAc...) asparagine; by host glycans are attached at residues asparagine 205, asparagine 239, asparagine 258, asparagine 269, asparagine 297, asparagine 317, asparagine 318, asparagine 339, asparagine 406, asparagine 420, asparagine 435, and asparagine 463. The segment at 306 to 486 (NLHFQILSTH…PSQPGFTINT (181 aa)) is mucin-like region. Positions 315–326 (HTNNSSDQSPAG) are enriched in polar residues. 3 disordered regions span residues 315 to 349 (HTNN…TDSP), 370 to 482 (NGET…QPGF), and 489 to 508 (KVAD…RQNT). Composition is skewed to polar residues over residues 370–421 (NGET…ASNE) and 429–472 (NPIQ…TSPG). The tract at residues 525-540 (GAAVGLAWIPYFGPAA) is fusion peptide. A coiled-coil region spans residues 555–596 (LICGLRQLANETTQALQLFLRATTELRTYSLLNRKAIDFLLQ). N-linked (GlcNAc...) asparagine; by host glycosylation is present at asparagine 564. The stretch at 616–635 (WTKNITDEINQIKHDFIDNP) forms a coiled coil. Asparagine 619 carries N-linked (GlcNAc...) asparagine; by host glycosylation. A helical membrane pass occupies residues 652 to 672 (WIPAGIGIIGVIIAIIALLCI). Residues cysteine 671 and cysteine 673 are each lipidated (S-palmitoyl cysteine; by host). Residues 673–677 (CKILC) lie on the Cytoplasmic side of the membrane.

The protein belongs to the filoviruses glycoprotein family. As to quaternary structure, homotrimer; each monomer consists of a GP1 and a GP2 subunit linked by disulfide bonds. The resulting peplomers (GP1,2) protrude from the virus surface as spikes. Interacts with host integrin alpha-V/ITGAV. Interacts with host CLEC10A. Binds also to host CD209 and CLEC4M/DC-SIGN(R). Interacts with host FOLR1. Interacts with BST2; this interaction inhibits the antiviral effect of BST2 and this allows viral release from infected cells. Interacts with host FCN1; this interaction enhances viral entry. Interacts with host TLR4; this interaction induces cell death in T-lymphocytes or proinflammatory cytokines and SOCS1 production in monocytes. In terms of assembly, interacts with host entry receptor NPC1. GP1 and GP2delta are part of GP1,2delta soluble complexes released by ectodomain shedding. Post-translationally, the signal peptide region modulates GP's high mannose glycosylation, thereby determining the efficiency of the interactions with DC-SIGN(R). N-glycosylated. In terms of processing, O-glycosylated in the mucin-like region. Post-translationally, palmitoylation of GP2 is not required for its function. Specific enzymatic cleavages in vivo yield mature proteins. The precursor is processed into GP1 and GP2 by host cell furin in the trans Golgi, and maybe by other host proteases, to yield the mature GP1 and GP2 proteins. The cleavage site corresponds to the furin optimal cleavage sequence [KR]-X-[KR]-R. This cleavage does not seem to be required for function. After the internalization of the virus into cell endosomes, GP1 C-terminus is removed by the endosomal proteases cathepsin B, cathepsin L, or both, leaving a 19-kDa N-terminal fragment which is further digested by cathepsin B. Proteolytic processing of GP1,2 by host ADAM17 can remove the transmembrane anchor of GP2 and leads to shedding of complexes consisting in GP1 and truncated GP2 (GP1,2delta).

The protein localises to the virion membrane. It localises to the host cell membrane. Its subcellular location is the secreted. In terms of biological role, trimeric GP1,2 complexes form the virion surface spikes and mediate the viral entry processes, with GP1 acting as the receptor-binding subunit and GP2 as the membrane fusion subunit. At later times of infection, down-regulates the expression of various host cell surface molecules that are essential for immune surveillance and cell adhesion. Down-modulates several integrins including ITGA1, ITGA2, ITGA3, ITGA4, ITGA5, ITGA6, ITGAV and ITGB1. This decrease in cell adhesion molecules may lead to cell detachment, contributing to the disruption of blood vessel integrity and hemorrhages developed during infection (cytotoxicity). Interacts with host TLR4 and thereby stimulates the differentiation and activation of monocytes leading to bystander death of T-lymphocytes. Down-regulates as well the function of host natural killer cells. Counteracts the antiviral effect of host BST2/tetherin that restricts release of progeny virions from infected cells. However, cooperates with VP40 and host BST2 to activate canonical NF-kappa-B pathway in a manner dependent on neddylation. Its function is as follows. Functions as a decoy for anti-GP1,2 antibodies thereby contributing to viral immune evasion. Interacts and activates host macrophages and dendritic cells inducing up-regulation of cytokine transcription. This effect is mediated throught activation of host TLR4. Responsible for binding to the receptor(s) on target cells. Interacts with CD209/DC-SIGN and CLEC4M/DC-SIGNR which act as cofactors for virus entry into dendritic cells (DCs) and endothelial cells. Binding to the macrophage specific lectin CLEC10A also seems to enhance virus infectivity. Interaction with FOLR1/folate receptor alpha may be a cofactor for virus entry in some cell types, although results are contradictory. Members of the Tyro3 receptor tyrosine kinase family also seem to be cell entry factors in filovirus infection. Once attached, the virions are internalized through clathrin-dependent endocytosis and/or macropinocytosis. After internalization of the virus into the endosomes of the host cell, proteolysis of GP1 by two cysteine proteases, CTSB/cathepsin B and CTSL/cathepsin L removes the glycan cap and allows GP1 binding to the host entry receptor NPC1. NPC1-binding, Ca(2+) and acidic pH induce a conformational change of GP2, which unmasks its fusion peptide and permit membranes fusion. Functionally, acts as a class I viral fusion protein. Under the current model, the protein has at least 3 conformational states: pre-fusion native state, pre-hairpin intermediate state, and post-fusion hairpin state. During viral and target cell membrane fusion, the coiled coil regions (heptad repeats) assume a trimer-of-hairpins structure, positioning the fusion peptide in close proximity to the C-terminal region of the ectodomain. The formation of this structure appears to drive apposition and subsequent fusion of viral and target cell membranes. Responsible for penetration of the virus into the cell cytoplasm by mediating the fusion of the membrane of the endocytosed virus particle with the endosomal membrane. Low pH in endosomes induces an irreversible conformational change in GP2, releasing the fusion hydrophobic peptide. This chain is Envelope glycoprotein (GP), found in Homo sapiens (Human).